We begin with the raw amino-acid sequence, 72 residues long: Translation initiation factor IF-1 (72 aa).

The S1-like domain maps to methionine 1 to arginine 72.

It belongs to the IF-1 family. As to quaternary structure, component of the 30S ribosomal translation pre-initiation complex which assembles on the 30S ribosome in the order IF-2 and IF-3, IF-1 and N-formylmethionyl-tRNA(fMet); mRNA recruitment can occur at any time during PIC assembly.

It is found in the cytoplasm. In terms of biological role, one of the essential components for the initiation of protein synthesis. Stabilizes the binding of IF-2 and IF-3 on the 30S subunit to which N-formylmethionyl-tRNA(fMet) subsequently binds. Helps modulate mRNA selection, yielding the 30S pre-initiation complex (PIC). Upon addition of the 50S ribosomal subunit IF-1, IF-2 and IF-3 are released leaving the mature 70S translation initiation complex. This is Translation initiation factor IF-1 from Treponema pallidum (strain Nichols).